The sequence spans 346 residues: Holliday junction branch migration complex subunit RuvB (346 aa).

The large ATPase domain (RuvB-L) stretch occupies residues 1-181; sequence MSDRNPLIDA…FGIPTRLNFY (181 aa). Residues L20, R21, G62, K65, T66, T67, 128–130, R171, Y181, and R218 each bind ATP; that span reads EDF. Residue T66 coordinates Mg(2+). The small ATPAse domain (RuvB-S) stretch occupies residues 182 to 252; sequence TVEELEYIVR…IADEALSRLE (71 aa). Residues 255–346 are head domain (RuvB-H); the sequence is NRGLDQLDRR…SQYGLFMEDE (92 aa). The DNA site is built by R291, R310, and R315.

The protein belongs to the RuvB family. Homohexamer. Forms an RuvA(8)-RuvB(12)-Holliday junction (HJ) complex. HJ DNA is sandwiched between 2 RuvA tetramers; dsDNA enters through RuvA and exits via RuvB. An RuvB hexamer assembles on each DNA strand where it exits the tetramer. Each RuvB hexamer is contacted by two RuvA subunits (via domain III) on 2 adjacent RuvB subunits; this complex drives branch migration. In the full resolvosome a probable DNA-RuvA(4)-RuvB(12)-RuvC(2) complex forms which resolves the HJ.

The protein resides in the cytoplasm. It catalyses the reaction ATP + H2O = ADP + phosphate + H(+). Its function is as follows. The RuvA-RuvB-RuvC complex processes Holliday junction (HJ) DNA during genetic recombination and DNA repair, while the RuvA-RuvB complex plays an important role in the rescue of blocked DNA replication forks via replication fork reversal (RFR). RuvA specifically binds to HJ cruciform DNA, conferring on it an open structure. The RuvB hexamer acts as an ATP-dependent pump, pulling dsDNA into and through the RuvAB complex. RuvB forms 2 homohexamers on either side of HJ DNA bound by 1 or 2 RuvA tetramers; 4 subunits per hexamer contact DNA at a time. Coordinated motions by a converter formed by DNA-disengaged RuvB subunits stimulates ATP hydrolysis and nucleotide exchange. Immobilization of the converter enables RuvB to convert the ATP-contained energy into a lever motion, pulling 2 nucleotides of DNA out of the RuvA tetramer per ATP hydrolyzed, thus driving DNA branch migration. The RuvB motors rotate together with the DNA substrate, which together with the progressing nucleotide cycle form the mechanistic basis for DNA recombination by continuous HJ branch migration. Branch migration allows RuvC to scan DNA until it finds its consensus sequence, where it cleaves and resolves cruciform DNA. The polypeptide is Holliday junction branch migration complex subunit RuvB (Brucella anthropi (strain ATCC 49188 / DSM 6882 / CCUG 24695 / JCM 21032 / LMG 3331 / NBRC 15819 / NCTC 12168 / Alc 37) (Ochrobactrum anthropi)).